We begin with the raw amino-acid sequence, 179 residues long: Large ribosomal subunit protein uL5c (179 aa).

It belongs to the universal ribosomal protein uL5 family. In terms of assembly, part of the 50S ribosomal subunit; contacts the 5S rRNA.

The protein resides in the plastid. It is found in the chloroplast. Binds 5S rRNA, forms part of the central protuberance of the 50S subunit. This is Large ribosomal subunit protein uL5c (rpl5) from Euglena gracilis.